The sequence spans 123 residues: MMANHLVKPDSRNCKRARELEPQVSDSPQVSSLGKSESSLSEASGLFYKEEALEKDLSDMSKEINLMLSTYAKILSERAAVDASYIDEIDGLFKEANIIENFLVQKREFLKQRFTVITNTLHK.

Positions 1-41 (MMANHLVKPDSRNCKRARELEPQVSDSPQVSSLGKSESSLS) are disordered. Over residues 7-21 (VKPDSRNCKRARELE) the composition is skewed to basic and acidic residues. Over residues 31-41 (SSLGKSESSLS) the composition is skewed to low complexity.

As to quaternary structure, interacts with SYCE2. Testis (at protein level). Detected in ovary. Expressed in both male and female germ cells.

The protein localises to the chromosome. Component of the transverse central element of synaptonemal complexes (SCS), formed between homologous chromosomes during meiotic prophase. Requires SYCP1 in order to be incorporated into the central element. The polypeptide is Testis-expressed protein 12 (Tex12) (Mus musculus (Mouse)).